We begin with the raw amino-acid sequence, 1136 residues long: Rho GTPase-activating protein 45 (1136 aa).

2 disordered regions span residues 1-73 (MFSR…RHAS) and 91-110 (HRSP…GAGP). 5 positions are modified to phosphoserine: Ser-23, Ser-25, Ser-73, Ser-93, and Ser-99. The region spanning 269-539 (EEVDVLLQRC…SSKLYDPGQQ (271 aa)) is the F-BAR domain. Coiled-coil stretches lie at residues 376–412 (EHEK…YVQR) and 440–499 (TATK…RQSD). Phosphoserine is present on residues Ser-569, Ser-578, Ser-592, and Ser-619. Residues 583–662 (DVARPEAAGS…SSTEELVDPD (80 aa)) are disordered. Positions 646–655 (TSSSGTMSST) are enriched in low complexity. Residues 702-747 (THRLRKLRTPAKCRECNSYVYFQGAECEECCLACHKKCLETLAIQC) form a Phorbol-ester/DAG-type zinc finger. The Rho-GAP domain maps to 761–974 (QDFSHAARSA…TLIVHYGLVF (214 aa)). 4 positions are modified to phosphoserine: Ser-949, Ser-1027, Ser-1030, and Ser-1032. The tract at residues 1061-1136 (EASLEVASGS…SCRERQPEFV (76 aa)) is disordered. Residues 1095–1109 (QQLSGFNTNQSNNVL) show a composition bias toward polar residues.

As to quaternary structure, HA-1 forms a complex with MHC class I HLA-A*0201. Expressed on cells of the hematopoietic lineage. Detected in dendritic cells and epidermal Langerhans cells. Expressed in peripheral blood mononuclear cells, in all leukemia/lymphoma cell lines. Detected also in some solid tumors and tissues such as cancerous and non-cancerous tissue.

The protein localises to the cytoplasm. Its subcellular location is the cell projection. The protein resides in the ruffle membrane. Its function is as follows. Contains a GTPase activator for the Rho-type GTPases (RhoGAP) domain that would be able to negatively regulate the actin cytoskeleton as well as cell spreading. However, also contains N-terminally a BAR-domin which is able to play an autoinhibitory effect on this RhoGAP activity. Precursor of the histocompatibility antigen HA-1. More generally, minor histocompatibility antigens (mHags) refer to immunogenic peptide which, when complexed with MHC, can generate an immune response after recognition by specific T-cells. The peptides are derived from polymorphic intracellular proteins, which are cleaved by normal pathways of antigen processing. The binding of these peptides to MHC class I or class II molecules and its expression on the cell surface can stimulate T-cell responses and thereby trigger graft rejection or graft-versus-host disease (GVHD) after hematopoietic stem cell transplantation from HLA-identical sibling donor. GVHD is a frequent complication after bone marrow transplantation (BMT), due to mismatch of minor histocompatibility antigen in HLA-matched sibling marrow transplants. Specifically, mismatching for mHag HA-1 which is recognized as immunodominant, is shown to be associated with the development of severe GVHD after HLA-identical BMT. HA-1 is presented to the cell surface by MHC class I HLA-A*0201, but also by other HLA-A alleles. This complex specifically elicits donor-cytotoxic T-lymphocyte (CTL) reactivity against hematologic malignancies after treatment by HLA-identical allogenic BMT. It induces cell recognition and lysis by CTL. The protein is Rho GTPase-activating protein 45 of Homo sapiens (Human).